The sequence spans 502 residues: UDP-glucuronosyltransferase 2C1 (502 aa).

N-linked (GlcNAc...) asparagine glycans are attached at residues Asn177 and Asn288. The chain crosses the membrane as a helical span at residues 466–481; the sequence is VVVFLLTCVATIIFLA.

It belongs to the UDP-glycosyltransferase family.

The protein localises to the microsome membrane. It localises to the endoplasmic reticulum membrane. It carries out the reaction glucuronate acceptor + UDP-alpha-D-glucuronate = acceptor beta-D-glucuronoside + UDP + H(+). Its function is as follows. UDPGT is of major importance in the conjugation and subsequent elimination of potentially toxic xenobiotics and endogenous compounds. This chain is UDP-glucuronosyltransferase 2C1 (UGT2C1), found in Oryctolagus cuniculus (Rabbit).